The chain runs to 429 residues: Glutamate-1-semialdehyde 2,1-aminomutase 2 (429 aa).

Position 268 is an N6-(pyridoxal phosphate)lysine (Lys-268).

Belongs to the class-III pyridoxal-phosphate-dependent aminotransferase family. HemL subfamily. In terms of assembly, homodimer. Pyridoxal 5'-phosphate serves as cofactor.

The protein localises to the cytoplasm. The enzyme catalyses (S)-4-amino-5-oxopentanoate = 5-aminolevulinate. It functions in the pathway porphyrin-containing compound metabolism; protoporphyrin-IX biosynthesis; 5-aminolevulinate from L-glutamyl-tRNA(Glu): step 2/2. In Bacillus velezensis (strain DSM 23117 / BGSC 10A6 / LMG 26770 / FZB42) (Bacillus amyloliquefaciens subsp. plantarum), this protein is Glutamate-1-semialdehyde 2,1-aminomutase 2.